The chain runs to 154 residues: Transmembrane protein 35B (154 aa).

The signal sequence occupies residues 1 to 22; the sequence is MALLLSVLRVLLGGFFALVGLA. 3 helical membrane-spanning segments follow: residues 63–83, 85–105, and 112–132; these read IAVG…PPML, EISN…LAAL, and CIPA…QLLA.

It belongs to the DoxX family.

It is found in the membrane. This chain is Transmembrane protein 35B, found in Homo sapiens (Human).